Here is a 255-residue protein sequence, read N- to C-terminus: Ribonuclease HII (255 aa).

The RNase H type-2 domain occupies 58–247; that stretch reads RYIAGIDEAG…VKSMVLGARY (190 aa). D64, E65, and D156 together coordinate a divalent metal cation.

The protein belongs to the RNase HII family. Requires Mn(2+) as cofactor. It depends on Mg(2+) as a cofactor.

Its subcellular location is the cytoplasm. It carries out the reaction Endonucleolytic cleavage to 5'-phosphomonoester.. In terms of biological role, endonuclease that specifically degrades the RNA of RNA-DNA hybrids. The chain is Ribonuclease HII from Syntrophomonas wolfei subsp. wolfei (strain DSM 2245B / Goettingen).